The sequence spans 124 residues: Protein YobA (124 aa).

A signal peptide spans methionine 1–alanine 26. Cu cation is bound by residues histidine 27 and histidine 113.

It belongs to the CopC family.

It is found in the periplasm. The protein is Protein YobA (yobA) of Escherichia coli O6:H1 (strain CFT073 / ATCC 700928 / UPEC).